The chain runs to 121 residues: Large ribosomal subunit protein uL14c (121 aa).

The protein belongs to the universal ribosomal protein uL14 family. As to quaternary structure, part of the 50S ribosomal subunit.

It is found in the plastid. Its subcellular location is the chloroplast. Functionally, binds to 23S rRNA. This Trieres chinensis (Marine centric diatom) protein is Large ribosomal subunit protein uL14c.